A 361-amino-acid polypeptide reads, in one-letter code: Phosphoserine aminotransferase (361 aa).

Arginine 42 lines the L-glutamate pocket. Residues 76 to 77 (AR), tryptophan 102, threonine 153, aspartate 173, and glutamine 196 each bind pyridoxal 5'-phosphate. Lysine 197 is modified (N6-(pyridoxal phosphate)lysine). Residue 238-239 (NT) coordinates pyridoxal 5'-phosphate.

Belongs to the class-V pyridoxal-phosphate-dependent aminotransferase family. SerC subfamily. As to quaternary structure, homodimer. The cofactor is pyridoxal 5'-phosphate.

It is found in the cytoplasm. The catalysed reaction is O-phospho-L-serine + 2-oxoglutarate = 3-phosphooxypyruvate + L-glutamate. It catalyses the reaction 4-(phosphooxy)-L-threonine + 2-oxoglutarate = (R)-3-hydroxy-2-oxo-4-phosphooxybutanoate + L-glutamate. The protein operates within amino-acid biosynthesis; L-serine biosynthesis; L-serine from 3-phospho-D-glycerate: step 2/3. It functions in the pathway cofactor biosynthesis; pyridoxine 5'-phosphate biosynthesis; pyridoxine 5'-phosphate from D-erythrose 4-phosphate: step 3/5. Catalyzes the reversible conversion of 3-phosphohydroxypyruvate to phosphoserine and of 3-hydroxy-2-oxo-4-phosphonooxybutanoate to phosphohydroxythreonine. The chain is Phosphoserine aminotransferase from Mannheimia succiniciproducens (strain KCTC 0769BP / MBEL55E).